Here is a 527-residue protein sequence, read N- to C-terminus: CTP synthase (527 aa).

The amidoligase domain stretch occupies residues 1–270 (MKYIFVTGGV…ADVLCQLLQL (270 aa)). A CTP-binding site is contributed by serine 12. Serine 12 serves as a coordination point for UTP. ATP is bound by residues 13-18 (GLGKGI) and aspartate 70. Residues aspartate 70 and glutamate 145 each coordinate Mg(2+). Residues 152 to 154 (DIE), 191 to 196 (KTKPTQ), and lysine 227 each bind CTP. UTP-binding positions include 191 to 196 (KTKPTQ) and lysine 227. Positions 292-525 (TIGIVSKYGK…VEACLKNRGK (234 aa)) constitute a Glutamine amidotransferase type-1 domain. Glycine 349 lines the L-glutamine pocket. The active-site Nucleophile; for glutamine hydrolysis is the cysteine 376. Residues 377-380 (LGFQ), glutamate 400, and arginine 455 contribute to the L-glutamine site. Catalysis depends on residues histidine 498 and glutamate 500.

This sequence belongs to the CTP synthase family. As to quaternary structure, homotetramer.

It carries out the reaction UTP + L-glutamine + ATP + H2O = CTP + L-glutamate + ADP + phosphate + 2 H(+). The catalysed reaction is L-glutamine + H2O = L-glutamate + NH4(+). The enzyme catalyses UTP + NH4(+) + ATP = CTP + ADP + phosphate + 2 H(+). It functions in the pathway pyrimidine metabolism; CTP biosynthesis via de novo pathway; CTP from UDP: step 2/2. Allosterically activated by GTP, when glutamine is the substrate; GTP has no effect on the reaction when ammonia is the substrate. The allosteric effector GTP functions by stabilizing the protein conformation that binds the tetrahedral intermediate(s) formed during glutamine hydrolysis. Inhibited by the product CTP, via allosteric rather than competitive inhibition. In terms of biological role, catalyzes the ATP-dependent amination of UTP to CTP with either L-glutamine or ammonia as the source of nitrogen. Regulates intracellular CTP levels through interactions with the four ribonucleotide triphosphates. This chain is CTP synthase, found in Methanospirillum hungatei JF-1 (strain ATCC 27890 / DSM 864 / NBRC 100397 / JF-1).